Reading from the N-terminus, the 392-residue chain is Mitochondrial distribution and morphology protein 10 (392 aa).

This sequence belongs to the MDM10 family. Component of the ER-mitochondria encounter structure (ERMES) or MDM complex, composed of MMM1, MDM10, MDM12 and MDM34. Associates with the mitochondrial outer membrane sorting assembly machinery SAM(core) complex.

The protein resides in the mitochondrion outer membrane. Its function is as follows. Component of the ERMES/MDM complex, which serves as a molecular tether to connect the endoplasmic reticulum and mitochondria. Components of this complex are involved in the control of mitochondrial shape and protein biogenesis and may function in phospholipid exchange. MDM10 is involved in the late assembly steps of the general translocase of the mitochondrial outer membrane (TOM complex). Functions in the TOM40-specific route of the assembly of outer membrane beta-barrel proteins, including the association of TOM40 with the receptor TOM22 and small TOM proteins. Can associate with the SAM(core) complex as well as the MDM12-MMM1 complex, both involved in late steps of the major beta-barrel assembly pathway, that is responsible for biogenesis of all outer membrane beta-barrel proteins. May act as a switch that shuttles between both complexes and channels precursor proteins into the TOM40-specific pathway. Plays a role in mitochondrial morphology and in the inheritance of mitochondria. This chain is Mitochondrial distribution and morphology protein 10, found in Phaeosphaeria nodorum (strain SN15 / ATCC MYA-4574 / FGSC 10173) (Glume blotch fungus).